The sequence spans 349 residues: Protein Wnt-7b (349 aa).

The N-terminal stretch at 1–24 (MHRNFRKWIFYVFLCFGVIYVKLG) is a signal peptide. Disulfide bonds link cysteine 73-cysteine 84, cysteine 123-cysteine 131, cysteine 133-cysteine 152, cysteine 200-cysteine 214, and cysteine 202-cysteine 209. 2 N-linked (GlcNAc...) asparagine glycosylation sites follow: asparagine 83 and asparagine 127. Serine 206 carries O-palmitoleoyl serine; by PORCN lipidation. A disordered linker region spans residues 238 to 266 (VEVVRASRLRQPTFLKIKQIKSYQKPMET). Cystine bridges form between cysteine 278-cysteine 309, cysteine 294-cysteine 304, cysteine 308-cysteine 348, cysteine 324-cysteine 339, cysteine 326-cysteine 336, and cysteine 331-cysteine 332. A glycan (N-linked (GlcNAc...) asparagine) is linked at asparagine 295.

The protein belongs to the Wnt family. Palmitoleoylation is required for efficient binding to frizzled receptors. Depalmitoleoylation leads to Wnt signaling pathway inhibition. Expressed in differentiating lens fiber cells.

Its subcellular location is the secreted. The protein localises to the extracellular space. The protein resides in the extracellular matrix. Ligand for members of the frizzled family of seven transmembrane receptors that functions in the canonical Wnt/beta-catenin signaling pathway. Required for normal fusion of the chorion and the allantois during placenta development. Required for central nervous system (CNS) angiogenesis and blood-brain barrier regulation. The sequence is that of Protein Wnt-7b (WNT7B) from Gallus gallus (Chicken).